The chain runs to 933 residues: C-1-tetrahydrofolate synthase, cytoplasmic (933 aa).

The interval 1–303 (MWEPQGSLDP…DRLLAPTWPL (303 aa)) is methylenetetrahydrofolate dehydrogenase and cyclohydrolase. Substrate-binding positions include 51 to 55 (YIRMK) and 98 to 100 (VQM). NADP(+) is bound by residues 170-172 (GRS) and S195. A substrate-binding site is contributed by 270-274 (PGGVG). Residues 304 to 933 (RPLRITPLSP…TKTGEIEGLF (630 aa)) form a formyltetrahydrofolate synthetase region. Position 378-385 (378-385 (TPLGEGKS)) interacts with ATP.

The protein in the N-terminal section; belongs to the tetrahydrofolate dehydrogenase/cyclohydrolase family. It in the C-terminal section; belongs to the formate--tetrahydrofolate ligase family. In terms of assembly, homodimer.

It localises to the cytoplasm. The catalysed reaction is (6R)-5,10-methylene-5,6,7,8-tetrahydrofolate + NADP(+) = (6R)-5,10-methenyltetrahydrofolate + NADPH. It carries out the reaction (6R)-5,10-methenyltetrahydrofolate + H2O = (6R)-10-formyltetrahydrofolate + H(+). It catalyses the reaction (6S)-5,6,7,8-tetrahydrofolate + formate + ATP = (6R)-10-formyltetrahydrofolate + ADP + phosphate. It participates in one-carbon metabolism; tetrahydrofolate interconversion. This is C-1-tetrahydrofolate synthase, cytoplasmic from Spodoptera frugiperda (Fall armyworm).